The sequence spans 296 residues: Glycine--tRNA ligase alpha subunit (296 aa).

This sequence belongs to the class-II aminoacyl-tRNA synthetase family. In terms of assembly, tetramer of two alpha and two beta subunits.

The protein resides in the cytoplasm. The enzyme catalyses tRNA(Gly) + glycine + ATP = glycyl-tRNA(Gly) + AMP + diphosphate. The protein is Glycine--tRNA ligase alpha subunit of Listeria welshimeri serovar 6b (strain ATCC 35897 / DSM 20650 / CCUG 15529 / CIP 8149 / NCTC 11857 / SLCC 5334 / V8).